Reading from the N-terminus, the 37-residue chain is Potassium channel toxin alpha-KTx 4.3 (37 aa).

3 disulfide bridges follow: cysteine 7–cysteine 28, cysteine 13–cysteine 33, and cysteine 17–cysteine 35. The interaction with Ca(2+)-activated K(+) channels stretch occupies residues 26 to 33 (GKCMNGKC).

In terms of tissue distribution, expressed by the venom gland.

It localises to the secreted. Blocks reversibly Shaker B potassium-channels. This Tityus discrepans (Venezuelan scorpion) protein is Potassium channel toxin alpha-KTx 4.3.